Consider the following 240-residue polypeptide: T4 protein (240 aa).

The protein belongs to the poxviruses B9 family.

This is T4 protein from Sheeppox virus (strain KS-1) (SPPV).